The primary structure comprises 441 residues: Acidic phosphoprotein (441 aa).

The or 24 signal peptide spans Met-1 to Ser-15. Asn-21 and Asn-112 each carry an N-linked (GlcNAc...) asparagine glycan. 18 tandem repeats follow at residues Glu-186 to Gln-193, Glu-194 to Met-201, Glu-202 to Asn-209, Glu-210 to Asn-217, Glu-218 to Asn-225, Glu-226 to Asn-233, Glu-234 to Asn-241, Glu-242 to Asn-249, Glu-250 to Asn-257, Glu-258 to Asn-265, Glu-266 to Asn-273, Glu-274 to Asn-281, Glu-282 to Asn-289, Glu-290 to Asn-297, Glu-298 to Asn-305, Glu-306 to Asn-313, Lys-353 to Glu-360, and Gln-361 to Gly-368. Positions Glu-186–Asn-313 are 16 X 8 AA tandem repeats. The segment at Leu-232–Val-416 is disordered. Positions Gly-238–Thr-247 are enriched in low complexity. The span at Thr-248–Asn-273 shows a compositional bias: acidic residues. Over residues Ser-294–Glu-306 the composition is skewed to polar residues. Residues Ala-312–Ala-332 are compositionally biased toward acidic residues. The span at Glu-349–Lys-371 shows a compositional bias: basic and acidic residues. The interval Lys-353–Gln-370 is 2 X 9 AA tandem repeats. A compositionally biased stretch (basic residues) spans Gly-372–Lys-415.

The protein resides in the cell membrane. During infection, this phosphoprotein probably modulates the structure of the red cell membrane to the advantage of the parasite, although its precise function is not known. In Plasmodium chabaudi, this protein is Acidic phosphoprotein (PCEMA1).